Consider the following 372-residue polypeptide: Invasion protein InvE (372 aa).

A compositionally biased stretch (polar residues) spans 1-19 (MIPGSTSGISFSRILSRQT). A disordered region spans residues 1–46 (MIPGSTSGISFSRILSRQTSHQDATQHTDAQQAEIQQAAEDSSPGA). Residues 21–40 (HQDATQHTDAQQAEIQQAAE) are compositionally biased toward low complexity.

The protein localises to the cell membrane. Involved in the triggering of intracellular events that lead to microbial internalization. These events include increase in calcium level, redistribution of actin microfilaments, and changes in the normal structure of the microvilli. Encoded within the type III secretion system (SPI-1 T3SS), it is essential for the translocation of protein effectors into host cells. Forms a complex with SipB and SipC in the presence of their chaperone SicA. Positively regulates the secretion of SPI-1 T3SS effector proteins SipB, SipC and SipD and negatively influences the secretion of SipA, SopA and SptP. This is Invasion protein InvE (invE) from Salmonella typhimurium (strain LT2 / SGSC1412 / ATCC 700720).